The sequence spans 40 residues: Sauvagin (40 aa).

Glutamine 1 bears the Pyrrolidone carboxylic acid mark. Position 40 is an isoleucine amide (isoleucine 40).

It belongs to the sauvagine/corticotropin-releasing factor/urotensin I family.

Its subcellular location is the secreted. Functionally, hypotensive and diuretic peptide. The chain is Sauvagin from Phyllomedusa sauvagei (Sauvage's leaf frog).